Reading from the N-terminus, the 255-residue chain is CDP-diacylglycerol pyrophosphatase (255 aa).

A helical transmembrane segment spans residues 5–27; it reads LLITVALIAVLALTTLVAWRYLF.

Belongs to the Cdh family.

It localises to the cell inner membrane. The enzyme catalyses a CDP-1,2-diacyl-sn-glycerol + H2O = a 1,2-diacyl-sn-glycero-3-phosphate + CMP + 2 H(+). Its pathway is phospholipid metabolism; CDP-diacylglycerol degradation; phosphatidate from CDP-diacylglycerol: step 1/1. The polypeptide is CDP-diacylglycerol pyrophosphatase (Cronobacter sakazakii (strain ATCC BAA-894) (Enterobacter sakazakii)).